A 225-amino-acid chain; its full sequence is Small ribosomal subunit protein uS3 (225 aa).

Residues 38-106 (IRKFVQNRFN…PVNLNIIEVK (69 aa)) enclose the KH type-2 domain.

This sequence belongs to the universal ribosomal protein uS3 family. Part of the 30S ribosomal subunit. Forms a tight complex with proteins S10 and S14.

In terms of biological role, binds the lower part of the 30S subunit head. Binds mRNA in the 70S ribosome, positioning it for translation. This chain is Small ribosomal subunit protein uS3, found in Leptospira interrogans serogroup Icterohaemorrhagiae serovar copenhageni (strain Fiocruz L1-130).